The primary structure comprises 93 residues: Small ribosomal subunit protein uS19 (93 aa).

It belongs to the universal ribosomal protein uS19 family.

Protein S19 forms a complex with S13 that binds strongly to the 16S ribosomal RNA. This is Small ribosomal subunit protein uS19 from Micrococcus luteus (strain ATCC 4698 / DSM 20030 / JCM 1464 / CCM 169 / CCUG 5858 / IAM 1056 / NBRC 3333 / NCIMB 9278 / NCTC 2665 / VKM Ac-2230) (Micrococcus lysodeikticus).